Here is a 1066-residue protein sequence, read N- to C-terminus: Ribosomal protein S6 kinase delta-1 (1066 aa).

One can recognise a PX domain in the interval serine 8–aspartate 132. The segment at valine 207 to glycine 228 is disordered. Over residues glutamate 212–arginine 223 the composition is skewed to basic and acidic residues. Residues valine 277–serine 305 form the MIT domain. 5 positions are modified to phosphoserine: serine 282, serine 423, serine 427, serine 449, and serine 455. The Protein kinase 1 domain maps to glycine 344 to glutamine 445. Residues valine 441–threonine 509 form a disordered region. Over residues serine 448–serine 458 the composition is skewed to low complexity. A compositionally biased stretch (polar residues) spans serine 474 to aspartate 483. Positions aspartate 492–serine 503 are enriched in low complexity. Serine 494, serine 528, serine 583, serine 605, serine 608, serine 640, serine 661, serine 664, serine 667, and serine 794 each carry phosphoserine. Residues histidine 553–serine 596 are disordered. Over residues serine 582–serine 593 the composition is skewed to low complexity. In terms of domain architecture, Protein kinase 2 spans serine 794–phenylalanine 1056. ATP is bound by residues glycine 801–valine 809 and arginine 820. Serine 872 bears the Phosphoserine mark. Aspartate 929 serves as the catalytic Proton acceptor.

This sequence belongs to the protein kinase superfamily. Ser/Thr protein kinase family. S6 kinase subfamily. In terms of assembly, interacts with SPHK1 and phosphatidylinositol 3-phosphate. Interacts (via PX domain) with PRDX3. As to expression, highly expressed in testis, skeletal muscle, brain, heart, placenta, kidney and liver and weakly expressed in thymus, small intestine, lung and colon.

It is found in the cytoplasm. Its subcellular location is the membrane. It localises to the early endosome. The catalysed reaction is L-seryl-[protein] + ATP = O-phospho-L-seryl-[protein] + ADP + H(+). The enzyme catalyses L-threonyl-[protein] + ATP = O-phospho-L-threonyl-[protein] + ADP + H(+). In terms of biological role, may be involved in transmitting sphingosine-1 phosphate (SPP)-mediated signaling into the cell. Plays a role in the recruitment of PRDX3 to early endosomes. In Homo sapiens (Human), this protein is Ribosomal protein S6 kinase delta-1 (RPS6KC1).